The chain runs to 898 residues: Alanine--tRNA ligase (898 aa).

Residues histidine 589, histidine 593, cysteine 693, and histidine 697 each contribute to the Zn(2+) site.

This sequence belongs to the class-II aminoacyl-tRNA synthetase family. It depends on Zn(2+) as a cofactor.

It is found in the cytoplasm. It carries out the reaction tRNA(Ala) + L-alanine + ATP = L-alanyl-tRNA(Ala) + AMP + diphosphate. In terms of biological role, catalyzes the attachment of alanine to tRNA(Ala) in a two-step reaction: alanine is first activated by ATP to form Ala-AMP and then transferred to the acceptor end of tRNA(Ala). Also edits incorrectly charged Ser-tRNA(Ala) and Gly-tRNA(Ala) via its editing domain. The sequence is that of Alanine--tRNA ligase from Methanothermobacter thermautotrophicus (strain ATCC 29096 / DSM 1053 / JCM 10044 / NBRC 100330 / Delta H) (Methanobacterium thermoautotrophicum).